We begin with the raw amino-acid sequence, 409 residues long: Thiaminase-1 (409 aa).

An N-terminal signal peptide occupies residues 1–29 (MSKVKGFIYKPLMVMLALLLVVVSPAGAG). Residue cysteine 143 is the Nucleophile of the active site. Glutamate 271 acts as the Proton acceptor in catalysis.

As to quaternary structure, monomer.

The protein resides in the secreted. It catalyses the reaction pyridine + thiamine = heteropyrithiamine + 5-(2-hydroxyethyl)-4-methylthiazole. Degrades thiamine by replacing its thiazole moiety with a wide range of nucleophiles. This Paenibacillus thiaminolyticus (Bacillus thiaminolyticus) protein is Thiaminase-1.